The sequence spans 372 residues: Serine proteinase inhibitor 1 (372 aa).

It belongs to the serpin family. Poxviruses subfamily.

The protein resides in the host cytoplasm. In terms of biological role, plays a role in mediating viral host range. May act to inhibit a caspase independent form of apoptosis to allow efficient virus replication in infected cells. The polypeptide is Serine proteinase inhibitor 1 (OPG208) (Homo sapiens (Human)).